The following is a 211-amino-acid chain: Small ribosomal subunit protein uS3 (211 aa).

The 69-residue stretch at 38–106 (LRKFIKKAFY…NIELNIIEVK (69 aa)) folds into the KH type-2 domain.

It belongs to the universal ribosomal protein uS3 family. In terms of assembly, part of the 30S ribosomal subunit. Forms a tight complex with proteins S10 and S14.

Its function is as follows. Binds the lower part of the 30S subunit head. Binds mRNA in the 70S ribosome, positioning it for translation. In Ehrlichia ruminantium (strain Welgevonden), this protein is Small ribosomal subunit protein uS3.